The primary structure comprises 139 residues: Ribulose bisphosphate carboxylase small subunit (139 aa).

It belongs to the RuBisCO small chain family. Heterohexadecamer of 8 large and 8 small subunits.

It localises to the plastid. The protein resides in the chloroplast. RuBisCO catalyzes two reactions: the carboxylation of D-ribulose 1,5-bisphosphate, the primary event in carbon dioxide fixation, as well as the oxidative fragmentation of the pentose substrate in the photorespiration process. Both reactions occur simultaneously and in competition at the same active site. Although the small subunit is not catalytic it is essential for maximal activity. This Detonula confervacea (Marine diatom) protein is Ribulose bisphosphate carboxylase small subunit.